Consider the following 210-residue polypeptide: CASP-like protein 3A1 (210 aa).

Residues 1 to 44 (MNGLKTPPEIGIQLPEAKVAAETGTMSGPLVPPRSDRSVRRGTD) are Cytoplasmic-facing. A helical membrane pass occupies residues 45-65 (VAHVVLRFVCLLTSVIALSLM). Topologically, residues 66-94 (ATAKEAASISIYGFLLPVSSKWSFSDSFE) are extracellular. The helical transmembrane segment at 95-115 (YLVGVSAAVAAHALLQLIISV) threads the bilayer. The Cytoplasmic portion of the chain corresponds to 116–130 (SRLLRKSPVIPSRNH). The chain crosses the membrane as a helical span at residues 131–151 (AWLIFAGDQAFAYAMLSAGSA). Topologically, residues 152-185 (ASGVTNLNRTGIRHSPLPNFCKPLRSFCDHVAAS) are extracellular. Residue asparagine 159 is glycosylated (N-linked (GlcNAc...) asparagine). The helical transmembrane segment at 186–206 (IAFTFFSCFLLATSAILDVIW) threads the bilayer. The Cytoplasmic segment spans residues 207–210 (LSKY).

This sequence belongs to the Casparian strip membrane proteins (CASP) family. In terms of assembly, homodimer and heterodimers.

The protein resides in the cell membrane. The sequence is that of CASP-like protein 3A1 from Vitis vinifera (Grape).